Reading from the N-terminus, the 143-residue chain is UPF0306 protein plu4501 (143 aa).

Belongs to the UPF0306 family.

This chain is UPF0306 protein plu4501, found in Photorhabdus laumondii subsp. laumondii (strain DSM 15139 / CIP 105565 / TT01) (Photorhabdus luminescens subsp. laumondii).